A 1067-amino-acid polypeptide reads, in one-letter code: Protein bric-a-brac 2 (1067 aa).

The disordered stretch occupies residues 30–121 (MAPPEEPKMV…PPRPLTSSEV (92 aa)). 2 stretches are compositionally biased toward basic and acidic residues: residues 47 to 62 (HLED…REVE) and 86 to 98 (KSPE…ELVK). Position 55 is a phosphotyrosine (tyrosine 55). 3 positions are modified to phosphoserine: serine 56, serine 87, and serine 147. A BTB domain is found at 223–288 (VDVTLSCEGH…MYKGEINVCQ (66 aa)). Disordered regions lie at residues 312–412 (GRGE…QSQP), 444–505 (ANQR…AAQH), and 525–563 (GAAG…SHHD). The span at 326–335 (FDDEDEEEEL) shows a compositional bias: acidic residues. Serine 377 is subject to Phosphoserine. Threonine 384 is modified (phosphothreonine). Residues 391-412 (GGESEISERGSSGTPGQSQSQP) show a composition bias toward low complexity. Composition is skewed to gly residues over residues 525–538 (GAAG…GSGS) and 545–556 (GGTGVAGSGAGA). The HTH psq-type domain maps to 635–687 (FRERGPLKSWRPEAMAEAIFSVLKEGLSLSQAARKFDIPYPTFVLYANRVHNM). The segment at residues 645–690 (RPEAMAEAIFSVLKEGLSLSQAARKFDIPYPTFVLYANRVHNMLGP) is a DNA-binding region (H-T-H motif). A DNA-binding region (a.T hook) is located at residues 697–708 (DPRPKARGRPQR). Disordered regions lie at residues 796-829 (QILS…PHAQ), 860-879 (AKHQ…PDLS), and 891-967 (VMPS…PYSA). Low complexity predominate over residues 812–829 (AHHQQQPSHHQQQSPHAQ). Positions 904–914 (AAPNSAASYAR) are enriched in low complexity. Positions 915 to 933 (ELSRERERDRERERERELS) are enriched in basic and acidic residues. The segment covering 934–949 (RQYGSQSRGSSSGSGS) has biased composition (low complexity).

In terms of tissue distribution, leg imaginal disk at the central region of the tarsus and in eye antenna disk at the basal cylinder.

The protein resides in the nucleus. Functionally, probably acts as a transcriptional regulator. Required for the specification of the tarsal segment. Also involved in antenna development. The chain is Protein bric-a-brac 2 (bab2) from Drosophila melanogaster (Fruit fly).